A 262-amino-acid chain; its full sequence is Putative hydroxypyruvate isomerase (262 aa).

Residues E146 and E244 each act as proton donor/acceptor in the active site.

This sequence belongs to the hyi family.

It catalyses the reaction 3-hydroxypyruvate = 2-hydroxy-3-oxopropanoate. Functionally, catalyzes the reversible isomerization between hydroxypyruvate and 2-hydroxy-3-oxopropanoate (also termed tartronate semialdehyde). In Caenorhabditis elegans, this protein is Putative hydroxypyruvate isomerase.